Reading from the N-terminus, the 195-residue chain is Small ribosomal subunit protein uS4 (195 aa).

In terms of domain architecture, S4 RNA-binding spans 92-152 (SRLDNIVYRL…EKHKHKANKN (61 aa)).

The protein belongs to the universal ribosomal protein uS4 family. As to quaternary structure, part of the 30S ribosomal subunit. Contacts protein S5. The interaction surface between S4 and S5 is involved in control of translational fidelity.

In terms of biological role, one of the primary rRNA binding proteins, it binds directly to 16S rRNA where it nucleates assembly of the body of the 30S subunit. With S5 and S12 plays an important role in translational accuracy. In Karelsulcia muelleri (strain GWSS) (Sulcia muelleri), this protein is Small ribosomal subunit protein uS4.